We begin with the raw amino-acid sequence, 722 residues long: Nucleolar protein 10 (722 aa).

5 WD repeats span residues 50 to 90 (EMPT…LKFE), 174 to 213 (TDAA…RVAA), 228 to 266 (EGLP…PLLV), 270 to 308 (YYGL…VFSS), and 310 to 349 (EPQA…PAPR). Coiled coils occupy residues 423–476 (EYRK…ANVA) and 511–534 (SNVA…EEQE). 4 disordered regions span residues 521–555 (LLEE…GWVQ), 572–607 (SYIQ…PRFY), 616–635 (RSFS…LEER), and 664–722 (TEKQ…RRPF). Over residues 523–534 (EEEQEQAEEEQE) the composition is skewed to acidic residues. Residues 572–586 (SYIQRQERRQQDRNT) show a composition bias toward basic and acidic residues. The span at 587 to 600 (RLQSSDTHTQQSHG) shows a compositional bias: polar residues. Residues 620–681 (DVSRKQKTHK…QAERDHHEER (62 aa)) adopt a coiled-coil conformation. Residues 664 to 682 (TEKQRFQQQAERDHHEERR) show a composition bias toward basic and acidic residues. Basic residues-rich tracts occupy residues 683–693 (RIRRSAGHLHS) and 702–722 (GGGR…RRPF).

The protein belongs to the WD repeat NOL10/ENP2 family.

The protein localises to the nucleus. Its subcellular location is the nucleolus. This chain is Nucleolar protein 10 (nol10), found in Danio rerio (Zebrafish).